We begin with the raw amino-acid sequence, 243 residues long: Urease accessory protein UreF (243 aa).

Belongs to the UreF family. In terms of assembly, ureD, UreF and UreG form a complex that acts as a GTP-hydrolysis-dependent molecular chaperone, activating the urease apoprotein by helping to assemble the nickel containing metallocenter of UreC. The UreE protein probably delivers the nickel.

It is found in the cytoplasm. Its function is as follows. Required for maturation of urease via the functional incorporation of the urease nickel metallocenter. The sequence is that of Urease accessory protein UreF from Xanthobacter autotrophicus (strain ATCC BAA-1158 / Py2).